The sequence spans 258 residues: MVLIRVLANLLILQLSYAQKSSELVIGGDECNINEHRFLALVFNSSGFLCSGTLINQEWVLTAAHCDMENMRIYLGVHNESVQYDDEQTRVPEEKFFCLRSNNDTKWDKDIMLIRLDSPVNNSAHIAPLNLPFNPPMLGSVCRIMGWGAITSPNEIYSSVPHCANINVLHYSMCRAVYPGMPAQTRILCAGIQTGGIDTCSGDSGGPLICNGQFQGIVSWGRYPCAKPRAPGLYTRVFDYTDWIENIIAGNTDASCPP.

A signal peptide spans Met-1 to Ala-18. Residues Gln-19–Leu-24 constitute a propeptide that is removed on maturation. The Peptidase S1 domain occupies Val-25 to Ala-249. 6 cysteine pairs are disulfide-bonded: Cys-31–Cys-163, Cys-50–Cys-66, Cys-98–Cys-256, Cys-142–Cys-210, Cys-174–Cys-189, and Cys-200–Cys-225. A glycan (N-linked (GlcNAc...) asparagine) is linked at Asn-44. Catalysis depends on His-65, which acts as the Charge relay system. 2 N-linked (GlcNAc...) asparagine glycosylation sites follow: Asn-79 and Asn-103. The active-site Charge relay system is the Asp-110. N-linked (GlcNAc...) asparagine glycosylation is present at Asn-121. Residue Ser-204 is the Charge relay system of the active site.

It belongs to the peptidase S1 family. Snake venom subfamily. Monomer. N-glycosylated. In terms of tissue distribution, expressed by the venom gland.

It localises to the secreted. Thrombin-like snake venom serine protease that cleaves fibrinogen beta (FGB) releasing fibrinopeptide B. Promotes capillary permeability-increasing activity through the release of peptides from the beta-chain of fibrinogen. In Gloydius ussuriensis (Ussuri mamushi), this protein is Thrombin-like enzyme CPI-enzyme 2.